We begin with the raw amino-acid sequence, 334 residues long: Protein-methionine-sulfoxide reductase catalytic subunit MsrP (334 aa).

A signal peptide (tat-type signal) is located at residues 1–44; sequence MKKNQFLKESDVTAESVFFMKRRQVLKALGISAAAFSLPHAAHA. Mo-molybdopterin is bound by residues Asn-88, 91–92, Cys-146, Thr-181, Asn-233, Arg-238, and 249–251; these read YE and GIK.

Belongs to the MsrP family. In terms of assembly, heterodimer of a catalytic subunit (MsrP) and a heme-binding subunit (MsrQ). The cofactor is Mo-molybdopterin. In terms of processing, predicted to be exported by the Tat system. The position of the signal peptide cleavage has not been experimentally proven.

It localises to the periplasm. It carries out the reaction L-methionyl-[protein] + a quinone + H2O = L-methionyl-(S)-S-oxide-[protein] + a quinol. The enzyme catalyses L-methionyl-[protein] + a quinone + H2O = L-methionyl-(R)-S-oxide-[protein] + a quinol. In terms of biological role, part of the MsrPQ system that repairs oxidized periplasmic proteins containing methionine sulfoxide residues (Met-O), using respiratory chain electrons. Thus protects these proteins from oxidative-stress damage caused by reactive species of oxygen and chlorine generated by the host defense mechanisms. MsrPQ is essential for the maintenance of envelope integrity under bleach stress, rescuing a wide series of structurally unrelated periplasmic proteins from methionine oxidation, including the primary periplasmic chaperone SurA and the lipoprotein Pal. The catalytic subunit MsrP is non-stereospecific, being able to reduce both (R-) and (S-) diastereoisomers of methionine sulfoxide. This is Protein-methionine-sulfoxide reductase catalytic subunit MsrP from Escherichia coli O6:H1 (strain CFT073 / ATCC 700928 / UPEC).